The primary structure comprises 329 residues: 4-methyl-2-oxopentanoate reductase A (329 aa).

NAD(+) is bound by residues 162-163, 240-242, and Asp-266; these read GI and TAR. Residue Arg-242 is part of the active site. The active site involves Glu-271. Catalysis depends on His-289, which acts as the Proton donor.

Belongs to the D-isomer specific 2-hydroxyacid dehydrogenase family.

It catalyses the reaction (2R)-hydroxy-4-methylpentanoate + NADP(+) = 4-methyl-2-oxopentanoate + NADPH + H(+). The enzyme catalyses a (2R)-2-hydroxycarboxylate + NADP(+) = a 2-oxocarboxylate + NADPH + H(+). 4-methyl-2-oxopentanoate (MOA) reductase that reduces MOA, a possible intermediate in leucine synthesis, to D-leucate in a NADPH- or NADH-dependent manner, but with a preference for NADPH. In addition to MOA, shows broad substrate specificity toward 2-keto acids. The polypeptide is 4-methyl-2-oxopentanoate reductase A (Aspergillus oryzae (strain ATCC 42149 / RIB 40) (Yellow koji mold)).